The following is a 128-amino-acid chain: Transcription antitermination protein NusB (128 aa).

The protein belongs to the NusB family.

Its function is as follows. Involved in transcription antitermination. Required for transcription of ribosomal RNA (rRNA) genes. Binds specifically to the boxA antiterminator sequence of the ribosomal RNA (rrn) operons. In Exiguobacterium sp. (strain ATCC BAA-1283 / AT1b), this protein is Transcription antitermination protein NusB.